A 601-amino-acid polypeptide reads, in one-letter code: Transcription factor Ken (601 aa).

Residues 33–101 (ADLTIVCENK…LYSGQTCITS (69 aa)) enclose the BTB domain. 3 disordered regions span residues 188-276 (AAEC…TINP), 331-365 (LSDG…DNQP), and 471-491 (DHPE…AGSN). Basic and acidic residues-rich tracts occupy residues 190–200 (ECERSGGHNNK) and 207–216 (CTHKDNKSDK). Residues 223–234 (NLSNAPPSGTSG) are compositionally biased toward polar residues. Low complexity predominate over residues 235-247 (SNSNISTSSNHQQ). Residues 248 to 258 (QQHHHHHHHNH) show a composition bias toward basic residues. A compositionally biased stretch (low complexity) spans 259 to 275 (NNNNNNNNNNSSSSTIN). The segment covering 476–490 (RSGSASGSGANLAGS) has biased composition (low complexity). 3 C2H2-type zinc fingers span residues 500–522 (YRCE…LRVH), 528–551 (FACR…CSVH), and 567–590 (YSCC…SGHH).

In terms of tissue distribution, expressed from stage 5 in two rather faint stripes at positions of 64% (anterior domain; AD) and 17% (posterior domain; PD) egg length. During early gastrulation, at stage 6, these two stripes become more evident and detectable at the region posterior to the cephalic furrow and in the hindgut primordium. The AD disappears as gastrulation proceeds, while the PD remains. At stage 15, the AD appears again in the foregut, and PD expression in the hindgut and anal pad. In imaginal disks, it is ubiquitously expressed in both males and females in genital and eye-antennal disks. Not expressed in the brain. In genital disks, it is expressed along the margin of the anterior bulbus in males, while in females it is expressed in the posterior compartment along the anterior-posterior border, with medial expansion in the most posterior region.

The protein localises to the nucleus. Transcription factor required for terminalia development. Negative regulator of the JAK/STAT pathway: represses JAK/STAT-dependent expression of ventral veins lacking (vvl) in the posterior spiracles. The protein is Transcription factor Ken (ken) of Drosophila melanogaster (Fruit fly).